The primary structure comprises 373 residues: 3 beta-hydroxysteroid dehydrogenase/Delta 5--&gt;4-isomerase type 2 (373 aa).

The active-site Proton acceptor is tyrosine 155. Lysine 159 lines the NAD(+) pocket. Residues 288-308 (LPLLYWLAFLLETVSFLLRPF) form a helical membrane-spanning segment.

This sequence belongs to the 3-beta-HSD family. In terms of tissue distribution, adrenal glands, testes and ovaries.

The protein localises to the endoplasmic reticulum membrane. The protein resides in the mitochondrion membrane. It carries out the reaction a 3beta-hydroxy-Delta(5)-steroid + NAD(+) = a 3-oxo-Delta(5)-steroid + NADH + H(+). The enzyme catalyses a 3-oxo-Delta(5)-steroid = a 3-oxo-Delta(4)-steroid. Its pathway is lipid metabolism; steroid biosynthesis. In terms of biological role, 3-beta-HSD is a bifunctional enzyme, that catalyzes the oxidative conversion of Delta(5)-ene-3-beta-hydroxy steroid, and the oxidative conversion of ketosteroids. The 3-beta-HSD enzymatic system plays a crucial role in the biosynthesis of all classes of hormonal steroids. The sequence is that of 3 beta-hydroxysteroid dehydrogenase/Delta 5--&gt;4-isomerase type 2 (Hsd3b) from Rattus norvegicus (Rat).